Reading from the N-terminus, the 474-residue chain is Protein U79/U80 (474 aa).

2 stretches are compositionally biased toward basic and acidic residues: residues 156–165 and 175–219; these read DRKKHDDEHR and RKVE…KRQK. Disordered regions lie at residues 156-219 and 412-441; these read DRKK…KRQK and SGQNRGRARGRGRGRAPRRRNSNINNSRTQ. Residues 417-432 are compositionally biased toward basic residues; the sequence is GRARGRGRGRAPRRRN.

The protein belongs to the herpesviridae U79/UL112 family.

It is found in the host nucleus. Functionally, may be involved in DNA replication. The polypeptide is Protein U79/U80 (U79/U80) (Homo sapiens (Human)).